Consider the following 101-residue polypeptide: MNSHFASAHTPFYINTKEGRYLVLKAVKVCDVRTVECEGSKASCVLKVDKPSSPACERRPSSPSRCERMNNPGKQVPFMRTDMLQNMFAANRDNVASRLLN.

Residues 51–73 are disordered; it reads PSSPACERRPSSPSRCERMNNPG. Phosphoserine occurs at positions 53 and 62. Residues 56-68 are compositionally biased toward basic and acidic residues; sequence CERRPSSPSRCER.

The protein belongs to the orthopoxvirus OPG062 family. Self-associates to form high molecular-weight forms. Interacts with protein OPG157. Interacts with host RICTOR and RPTOR; these interactions disrupt the mTORC1 and mTORC2 crosstalk. In terms of processing, phosphorylated on two serines. While these phosphorylations do not play a role in virion assembly; they are essential for the interaction with host RICTOR and RPTOR.

The protein resides in the virion. In terms of biological role, plays an essential role in virion assembly and morphogenesis. Also plays a role in the inhibition of host immune response by dysregulating mTOR. Sequesters host RICTOR and RPTOR, thereby disrupting mTORC1 and mTORC2 crosstalk. In turn, blocks the host antiviral response in part through mTOR-dependent degradation of cGAS, the primary poxvirus sensor. The protein is Phosphoprotein OPG062 (OPG062) of Homo sapiens (Human).